Consider the following 264-residue polypeptide: uncharacterized protein (264 aa).

An N-terminal signal peptide occupies residues 1–22 (MIHSKKLTLGICLVLLIILIGG). Residue cysteine 23 is the site of N-palmitoyl cysteine attachment. Cysteine 23 is lipidated: S-diacylglycerol cysteine.

It belongs to the staphylococcal tandem lipoprotein family.

The protein localises to the cell membrane. This is an uncharacterized protein from Staphylococcus aureus (strain N315).